The chain runs to 393 residues: NAD(P)H-quinone oxidoreductase subunit H, chloroplastic (393 aa).

The protein belongs to the complex I 49 kDa subunit family. In terms of assembly, NDH is composed of at least 16 different subunits, 5 of which are encoded in the nucleus.

It is found in the plastid. The protein resides in the chloroplast thylakoid membrane. The catalysed reaction is a plastoquinone + NADH + (n+1) H(+)(in) = a plastoquinol + NAD(+) + n H(+)(out). It carries out the reaction a plastoquinone + NADPH + (n+1) H(+)(in) = a plastoquinol + NADP(+) + n H(+)(out). NDH shuttles electrons from NAD(P)H:plastoquinone, via FMN and iron-sulfur (Fe-S) centers, to quinones in the photosynthetic chain and possibly in a chloroplast respiratory chain. The immediate electron acceptor for the enzyme in this species is believed to be plastoquinone. Couples the redox reaction to proton translocation, and thus conserves the redox energy in a proton gradient. This chain is NAD(P)H-quinone oxidoreductase subunit H, chloroplastic, found in Oenothera biennis (German evening primrose).